Here is a 197-residue protein sequence, read N- to C-terminus: Phosphoheptose isomerase (197 aa).

Residues 36–197 enclose the SIS domain; that stretch reads MVNALLNEGK…IDSQLFGSEE (162 aa). Residue 51–53 participates in substrate binding; that stretch reads NGG. Zn(2+) is bound by residues His60 and Glu64. Substrate-binding positions include Glu64, 93-94, 119-121, Ser124, and Gln174; these read ND and STS. Gln174 and His182 together coordinate Zn(2+).

The protein belongs to the SIS family. GmhA subfamily. Homotetramer. Zn(2+) serves as cofactor.

The protein resides in the cytoplasm. It catalyses the reaction 2 D-sedoheptulose 7-phosphate = D-glycero-alpha-D-manno-heptose 7-phosphate + D-glycero-beta-D-manno-heptose 7-phosphate. Its pathway is carbohydrate biosynthesis; D-glycero-D-manno-heptose 7-phosphate biosynthesis; D-glycero-alpha-D-manno-heptose 7-phosphate and D-glycero-beta-D-manno-heptose 7-phosphate from sedoheptulose 7-phosphate: step 1/1. Catalyzes the isomerization of sedoheptulose 7-phosphate in D-glycero-D-manno-heptose 7-phosphate. This is Phosphoheptose isomerase from Pseudomonas syringae pv. syringae (strain B728a).